The sequence spans 637 residues: 3D-(3,5/4)-trihydroxycyclohexane-1,2-dione hydrolase (637 aa).

Residue Glu66 coordinates thiamine diphosphate. Residues 442–522 are thiamine pyrophosphate binding; sequence SLPGDLQRLW…INILLFDNAG (81 aa). The Mg(2+) site is built by Asp493 and Asn520.

Belongs to the TPP enzyme family. Mg(2+) is required as a cofactor. Thiamine diphosphate serves as cofactor.

It catalyses the reaction 3D-3,5/4-trihydroxycyclohexane-1,2-dione + H2O = 5-deoxy-D-glucuronate + H(+). It participates in polyol metabolism; myo-inositol degradation into acetyl-CoA; acetyl-CoA from myo-inositol: step 3/7. Involved in the cleavage of the C1-C2 bond of 3D-(3,5/4)-trihydroxycyclohexane-1,2-dione (THcHDO) to yield 5-deoxy-glucuronate (5DG). This chain is 3D-(3,5/4)-trihydroxycyclohexane-1,2-dione hydrolase, found in Shouchella clausii (strain KSM-K16) (Alkalihalobacillus clausii).